A 65-amino-acid chain; its full sequence is Small ribosomal subunit protein bS21A (65 aa).

The protein belongs to the bacterial ribosomal protein bS21 family.

The sequence is that of Small ribosomal subunit protein bS21A from Francisella tularensis subsp. holarctica (strain LVS).